The chain runs to 367 residues: Heparan sulfate glucosamine 3-O-sulfotransferase 2 (367 aa).

Topologically, residues 1–19 (MAYRVLGRAGPPQPRRARR) are cytoplasmic. The chain crosses the membrane as a helical; Signal-anchor for type II membrane protein span at residues 20–39 (LLFAFTLSLSCTYLCYSFLC). The Lumenal portion of the chain corresponds to 40–367 (CCDDLGRSRL…ETVGQDFRWE (328 aa)). A disordered region spans residues 61 to 110 (AGGQKLLQKSRPCDPSGPTPSEPSAPSAPAAAVPAPRLSGSNHSGSPKLG). Residues 84–96 (SAPSAPAAAVPAP) are compositionally biased toward low complexity. Residue Asn-102 is glycosylated (N-linked (GlcNAc...) asparagine). Position 124–128 (124–128 (KGGTR)) interacts with 3'-phosphoadenylyl sulfate. Substrate is bound by residues 146–152 (EPHFFDR) and 177–180 (KTPS). An N-linked (GlcNAc...) asparagine glycan is attached at Asn-193. Arg-205 and Ser-213 together coordinate 3'-phosphoadenylyl sulfate. N-linked (GlcNAc...) asparagine glycosylation occurs at Asn-235. Residue 245-246 (WN) coordinates substrate. N-linked (GlcNAc...) asparagine glycosylation is present at Asn-306. Cys-313 and Cys-325 form a disulfide bridge. Residue 330–334 (KGRTH) participates in 3'-phosphoadenylyl sulfate binding.

The protein belongs to the sulfotransferase 1 family. In terms of tissue distribution, highly expressed in the brain and weakly expressed in the heart, placenta, lung and skeletal muscle.

The protein resides in the golgi apparatus membrane. It catalyses the reaction alpha-D-glucosaminyl-[heparan sulfate](n) + 3'-phosphoadenylyl sulfate = 3-sulfo-alpha-D-glucosaminyl-[heparan sulfate](n) + adenosine 3',5'-bisphosphate + H(+). In terms of biological role, sulfotransferase that utilizes 3'-phospho-5'-adenylyl sulfate (PAPS) to catalyze the transfer of a sulfo group to an N-unsubstituted glucosamine linked to a 2-O-sulfo iduronic acid unit on heparan sulfate. Catalyzes the O-sulfation of glucosamine in GlcA2S-GlcNS. Unlike HS3ST1/3-OST-1, does not convert non-anticoagulant heparan sulfate to anticoagulant heparan sulfate. The sequence is that of Heparan sulfate glucosamine 3-O-sulfotransferase 2 (HS3ST2) from Homo sapiens (Human).